Reading from the N-terminus, the 71-residue chain is Sec-independent protein translocase protein TatA (71 aa).

Residues 1–21 (MGSFSLLHWLVVLVIVLLVFG) form a helical membrane-spanning segment. Residues 43–71 (LHEDDKPTDQLGSTSQSTASGPQQDHGKH) are disordered. Residues 52–65 (QLGSTSQSTASGPQ) are compositionally biased toward polar residues.

Belongs to the TatA/E family. As to quaternary structure, the Tat system comprises two distinct complexes: a TatABC complex, containing multiple copies of TatA, TatB and TatC subunits, and a separate TatA complex, containing only TatA subunits. Substrates initially bind to the TatABC complex, which probably triggers association of the separate TatA complex to form the active translocon.

It localises to the cell inner membrane. Functionally, part of the twin-arginine translocation (Tat) system that transports large folded proteins containing a characteristic twin-arginine motif in their signal peptide across membranes. TatA could form the protein-conducting channel of the Tat system. The protein is Sec-independent protein translocase protein TatA of Xylella fastidiosa (strain M12).